The following is a 176-amino-acid chain: Cytochrome b (176 aa).

3 consecutive transmembrane segments (helical) span residues 33–53 (FGSL…FLAM), 77–98 (WMLR…YLHV), and 113–133 (WNVG…GYVL). Heme b is bound by residues His-83 and His-97.

It belongs to the cytochrome b family. In terms of assembly, the cytochrome bc1 complex contains 11 subunits: 3 respiratory subunits (MT-CYB, CYC1 and UQCRFS1), 2 core proteins (UQCRC1 and UQCRC2) and 6 low-molecular weight proteins (UQCRH/QCR6, UQCRB/QCR7, UQCRQ/QCR8, UQCR10/QCR9, UQCR11/QCR10 and a cleavage product of UQCRFS1). This cytochrome bc1 complex then forms a dimer. The cofactor is heme b.

It localises to the mitochondrion inner membrane. In terms of biological role, component of the ubiquinol-cytochrome c reductase complex (complex III or cytochrome b-c1 complex) that is part of the mitochondrial respiratory chain. The b-c1 complex mediates electron transfer from ubiquinol to cytochrome c. Contributes to the generation of a proton gradient across the mitochondrial membrane that is then used for ATP synthesis. The chain is Cytochrome b (MT-CYB) from Idionycteris phyllotis (Allen's big-eared bat).